The chain runs to 336 residues: Phenylalanine--tRNA ligase alpha subunit (336 aa).

E259 serves as a coordination point for Mg(2+).

This sequence belongs to the class-II aminoacyl-tRNA synthetase family. Phe-tRNA synthetase alpha subunit type 1 subfamily. Tetramer of two alpha and two beta subunits. Mg(2+) serves as cofactor.

The protein localises to the cytoplasm. The catalysed reaction is tRNA(Phe) + L-phenylalanine + ATP = L-phenylalanyl-tRNA(Phe) + AMP + diphosphate + H(+). The protein is Phenylalanine--tRNA ligase alpha subunit of Tropheryma whipplei (strain Twist) (Whipple's bacillus).